Reading from the N-terminus, the 379-residue chain is Small ribosomal subunit protein uS2cy (379 aa).

Positions M1–S94 are N-terminal extension. A disordered region spans residues N83 to V106.

The protein belongs to the universal ribosomal protein uS2 family.

The protein resides in the plastid. The protein localises to the chloroplast. This Tetradesmus obliquus (Green alga) protein is Small ribosomal subunit protein uS2cy (rps2-2).